Here is a 502-residue protein sequence, read N- to C-terminus: ATP synthase subunit alpha (502 aa).

Residue 169–176 participates in ATP binding; sequence GDRQTGKT.

The protein belongs to the ATPase alpha/beta chains family. F-type ATPases have 2 components, CF(1) - the catalytic core - and CF(0) - the membrane proton channel. CF(1) has five subunits: alpha(3), beta(3), gamma(1), delta(1), epsilon(1). CF(0) has three main subunits: a(1), b(2) and c(9-12). The alpha and beta chains form an alternating ring which encloses part of the gamma chain. CF(1) is attached to CF(0) by a central stalk formed by the gamma and epsilon chains, while a peripheral stalk is formed by the delta and b chains.

It localises to the cell inner membrane. The enzyme catalyses ATP + H2O + 4 H(+)(in) = ADP + phosphate + 5 H(+)(out). Its function is as follows. Produces ATP from ADP in the presence of a proton gradient across the membrane. The alpha chain is a regulatory subunit. This chain is ATP synthase subunit alpha, found in Trichlorobacter lovleyi (strain ATCC BAA-1151 / DSM 17278 / SZ) (Geobacter lovleyi).